Here is a 770-residue protein sequence, read N- to C-terminus: Shutoff protein (770 aa).

Disordered stretches follow at residues 1–20 (MEED…PNSE) and 30–49 (EEEN…PEDG). Positions 10 to 19 (DSETLTTPNS) are enriched in polar residues. The tract at residues 248–312 (VMDQVLIKRA…AVLVTVELEC (65 aa)) is binding to host EIF4G. Residues 315–433 (RFFANPQTLR…ELWTSFDERT (119 aa)) form the RRM domain. 2 positions are modified to phosphotyrosine; by host: Tyr-332 and Tyr-647. Residues 661 to 770 (LSAAASCRSQ…TATMFTESQP (110 aa)) are disordered. Positions 726 to 739 (GGPRGRGGRNHRQR) are enriched in basic residues. Polar residues predominate over residues 742–755 (TIFQKTRSEPTSEN).

Belongs to the adenoviridae shutoff protein family. In terms of assembly, monomer. Interacts with hexon protein; this interaction allows chaperoning and trimerization of hexon proteins. Interacts (via N-terminus) with host initiation factor EIF4G (via C-terminus). Interacts (via RRM domain) with viral mRNAs that contain the tripartite leader; this interaction allows ribosome shunting and expression of viral late mRNAs. Post-translationally, might be cleaved by the viral protease. In terms of processing, phosphorylated. Tyrosine phosphorylation enhances preferential binding to tripartite leader mRNAs and allows ribosome shunting. Methylated. Asymmetric dimethylation by host PRMT1 of the Arg/Gly-rich region may regulate shutoff protein binding to hexon and promote the capsid assembly in the nucleus.

It localises to the host cytoplasm. Functionally, protein that inhibits host translation while promoting late viral translation by ribosome shunting. Blocks host cap-dependent translation by binding to eIF4G, displacing MKNK1 from cap initiation complexes and preventing EIF4E phosphorylation. Binds to the tripartite leader sequence of viral late mRNAs and recruits host eIF4G, PABPC1/poly-A binding protein and 40S ribosomes subunits on viral mRNAs, allowing ribosome shunting and efficient translation of late viral mRNAs even though conventional translation via ribosome scanning from the cap has been shut off in the host cell. During assembly, acts as a chaperone protein that helps hexon proteins assembly into trimers. The protein is Shutoff protein of Human adenovirus F serotype 40 (HAdV-40).